Here is a 107-residue protein sequence, read N- to C-terminus: ATP synthase subunit c (107 aa).

3 consecutive transmembrane segments (helical) span residues 4 to 24 (IVFL…SMNQ), 29 to 49 (FSIL…AIGM), and 74 to 94 (MFIA…IALI).

This sequence belongs to the ATPase C chain family. As to quaternary structure, F-type ATPases have 2 components, F(1) - the catalytic core - and F(0) - the membrane proton channel. F(1) has five subunits: alpha(3), beta(3), gamma(1), delta(1), epsilon(1). F(0) has three main subunits: a(1), b(2) and c(10-14). The alpha and beta chains form an alternating ring which encloses part of the gamma chain. F(1) is attached to F(0) by a central stalk formed by the gamma and epsilon chains, while a peripheral stalk is formed by the delta and b chains.

Its subcellular location is the cell inner membrane. Its function is as follows. F(1)F(0) ATP synthase produces ATP from ADP in the presence of a proton or sodium gradient. F-type ATPases consist of two structural domains, F(1) containing the extramembraneous catalytic core and F(0) containing the membrane proton channel, linked together by a central stalk and a peripheral stalk. During catalysis, ATP synthesis in the catalytic domain of F(1) is coupled via a rotary mechanism of the central stalk subunits to proton translocation. In terms of biological role, key component of the F(0) channel; it plays a direct role in translocation across the membrane. A homomeric c-ring of between 10-14 subunits forms the central stalk rotor element with the F(1) delta and epsilon subunits. The polypeptide is ATP synthase subunit c (Campylobacter lari (strain RM2100 / D67 / ATCC BAA-1060)).